Reading from the N-terminus, the 94-residue chain is Small ribosomal subunit protein uS17 (94 aa).

Belongs to the universal ribosomal protein uS17 family. Part of the 30S ribosomal subunit.

Functionally, one of the primary rRNA binding proteins, it binds specifically to the 5'-end of 16S ribosomal RNA. The sequence is that of Small ribosomal subunit protein uS17 from Symbiobacterium thermophilum (strain DSM 24528 / JCM 14929 / IAM 14863 / T).